A 725-amino-acid chain; its full sequence is MVMKASVEDDDSGWELGMPDKMEKSNTDWVDITQDFEEACRELKLGELLHDKLFGLFEAMSAIEMMDPKMDAGMIGNQVNRKVLNFEQAIKDGTIKIKDLTSPELIGIMDTCFCCLITWLEGHSLAQTVFTCLYIHNPDFIEDPAMKAFALGILKICDIAREKVNKAAVFEEEDFQSMTYGFKMANSVTDLRVTGMLKDVEDDMQRRVKSTRSRQGEERDPEVELEHQQCLAVFSRVKFTRVLLTVLIAFTKKETSAVAEAQELMTQAADLLSAIHNSCIHGIQAQNDTTKGDHPIMMGFEPLVNQRLLPPTFPRYAKIIKREEMVNYFSKLIDRIKTVCEVVNLTNLHCILDFFCEFSEQSPCVLSRSLLQTTFLVDNKKVFGTHLMQDMVKDALRSFVSPPVLSPKCCLYNNHQAKDYIDSFVTHCVRPFCSLIQIHGHNRARQRDKLGHILEEFATLQDEAEKVDAALHSMLLKQEPQRQHLACLGTWVLYHNLRIMIQYLLSGFELELYSMHEYYYIYWYLSEFLYAWLMSTLSRADSSQMAEERIMEEQQKGRSSKKTKKKKKVRPLSREITMSQAYQNMCAGMYKTMIAFDMDGKVRKPKFELDSEQVRYEHRFAPFNSVITPPPVHYLQFKEMSDLNKYSPPPQSADLYMAASKHFQQAKMILENIPNPDHEVNRILKVAKPNIVVMKLLAGGHKKDSKVPPEFDFSPHKYFPVVKLV.

Positions 548-573 (ERIMEEQQKGRSSKKTKKKKKVRPLS) are disordered. Residues 558–571 (RSSKKTKKKKKVRP) are compositionally biased toward basic residues.

It belongs to the MAK10 family. In terms of assembly, component of the N-terminal acetyltransferase C (NatC) complex.

It localises to the cytoplasm. Functionally, auxillary component of the N-terminal acetyltransferase C (NatC) complex which catalyzes acetylation of N-terminal methionine residues. N-terminal acetylation protects proteins from ubiquitination and degradation by the N-end rule pathway. This is N-alpha-acetyltransferase 35, NatC auxiliary subunit (NAA35) from Gallus gallus (Chicken).